Consider the following 485-residue polypeptide: U4/U6 small nuclear ribonucleoprotein Prp31 homolog (485 aa).

Disordered regions lie at residues 1–36 and 329–361; these read MATLEDSFLADLDELSDNEAELDENDGDVGKEEEDV and IEKWQEPPPARQPKPLPVPDSEPKKRRGGRRLR. Residues 11 to 36 are compositionally biased toward acidic residues; sequence DLDELSDNEAELDENDGDVGKEEEDV. Residues 216–334 form the Nop domain; sequence IAPNLSAIVG…IRKKIEKWQE (119 aa). Pro residues predominate over residues 334–348; sequence EPPPARQPKPLPVPD. Over residues 352–361 the composition is skewed to basic residues; sequence KKRRGGRRLR. Positions 352-365 match the Nuclear localization signal motif; it reads KKRRGGRRLRKMKE.

Belongs to the PRP31 family. Component of the U4/U6-U5 tri-snRNP complex composed of the U4, U6 and U5 snRNAs and pre-mRNA-splicing factors. Interacts with STA1 and SOP1.

The protein localises to the nucleus. It localises to the cajal body. Involved in pre-mRNA splicing. Required for the assembly of the U4/U5/U6 tri-snRNP complex, one of the building blocks of the spliceosome. Functions in association with STA1 and ZOP1 in spliceosome dynamics and pre-mRNA splicing. Required for transcriptional regulation and pre-mRNA splicing of cold-responsive genes, such as LTI78/RD29A, KIN2/COR6.6 or COR15A, especially under cold stress. May play a role in stress response. Involved in transcriptional gene silencing of endogenous transposable elements, independently of the RNA-directed DNA methylation (RdDM) pathway. Seems not to participate in the small RNA biogenesis of the RdDM pathway. In Arabidopsis thaliana (Mouse-ear cress), this protein is U4/U6 small nuclear ribonucleoprotein Prp31 homolog.